Here is a 677-residue protein sequence, read N- to C-terminus: Mitochondrial disaggregase (677 aa).

Residues 1-57 (MMLSAVLRRTAPAPRLFLGLIKSPSLQSRGGAYNRSVITGDRGEPQRLRTAAWVRPG) constitute a mitochondrion transit peptide. The interval 64-103 (PGRGAATGGRRGERTEIPYLTAASSGRGPSPEETLPGQDS) is disordered. Residues 92–126 (PSPEETLPGQDSWNGVPNKAGLGMWALAMALVVQC) are autoinhibitory. 4 ANK repeats span residues 133-162 (NKDA…DVNA), 166-195 (LGWT…DPNL), 235-265 (KGCT…PLQR), and 268-297 (MGHT…EKQR). ATP-binding residues include H316, I318, S353, G354, I355, G356, K357, T358, E425, and N466. The interval 477–505 (LQLRQEALEMSRNRIAENLGDVQISDKIT) is regulatory; slows ATPase and disaggregase activities. R531 contributes to the ATP binding site. N6-acetyllysine is present on K559. R590 provides a ligand contact to ATP.

This sequence belongs to the ClpA/ClpB family. In terms of assembly, homododecamer when substrate-bound; the homododecamer consists of 2 homohexamers stacked head-to-head via ANK repeat-mediated interactions. The active substrate-bound form is likely to exist in a dynamic equilibrium between homohexamers and homododecamers. Homotetradecamer in the unbound state which is remodeled upon substrate binding into the homododecamer. Interacts with PHB and PHB2. Interacts with MAVS; the interaction is enhanced by Sendai virus infection. In terms of processing, proteolytically cleaved by protease PARL. ATP-dependent protein disaggregase activity is stimulated by PARL-mediated cleavage of the N-terminal autoinhibitory peptide.

Its subcellular location is the mitochondrion intermembrane space. The catalysed reaction is ATP + H2O = ADP + phosphate + H(+). Disaggregase activity is inhibited by ADP. Functions as a regulatory ATPase and participates in secretion/protein trafficking process. Has ATP-dependent protein disaggregase activity and is required to maintain the solubility of key mitochondrial proteins. Involved in mitochondrial-mediated antiviral innate immunity, activates RIG-I-mediated signal transduction and production of IFNB1 and pro-inflammatory cytokine IL6. Plays a role in granulocyte differentiation. In Rattus norvegicus (Rat), this protein is Mitochondrial disaggregase.